We begin with the raw amino-acid sequence, 232 residues long: Ribonuclease 3 (232 aa).

The 123-residue stretch at 9-131 (INLLQKKLGY…IIGGIFLDSN (123 aa)) folds into the RNase III domain. Glutamate 44 lines the Mg(2+) pocket. Residue aspartate 48 is part of the active site. Residues aspartate 117 and glutamate 120 each contribute to the Mg(2+) site. Glutamate 120 is a catalytic residue. One can recognise a DRBM domain in the interval 158–228 (DPKTRLQEYL…AENALKFLIE (71 aa)).

The protein belongs to the ribonuclease III family. Homodimer. Requires Mg(2+) as cofactor.

The protein localises to the cytoplasm. It catalyses the reaction Endonucleolytic cleavage to 5'-phosphomonoester.. Functionally, digests double-stranded RNA. Involved in the processing of primary rRNA transcript to yield the immediate precursors to the large and small rRNAs (23S and 16S). Processes some mRNAs, and tRNAs when they are encoded in the rRNA operon. Processes pre-crRNA and tracrRNA of type II CRISPR loci if present in the organism. The chain is Ribonuclease 3 from Blochmanniella floridana.